A 300-amino-acid polypeptide reads, in one-letter code: Bifunctional protein FolD (300 aa).

NADP(+) is bound by residues 172–174, serine 206, and isoleucine 247; that span reads GRS.

The protein belongs to the tetrahydrofolate dehydrogenase/cyclohydrolase family. Homodimer.

It carries out the reaction (6R)-5,10-methylene-5,6,7,8-tetrahydrofolate + NADP(+) = (6R)-5,10-methenyltetrahydrofolate + NADPH. It catalyses the reaction (6R)-5,10-methenyltetrahydrofolate + H2O = (6R)-10-formyltetrahydrofolate + H(+). Its pathway is one-carbon metabolism; tetrahydrofolate interconversion. Its function is as follows. Catalyzes the oxidation of 5,10-methylenetetrahydrofolate to 5,10-methenyltetrahydrofolate and then the hydrolysis of 5,10-methenyltetrahydrofolate to 10-formyltetrahydrofolate. This Rhodopirellula baltica (strain DSM 10527 / NCIMB 13988 / SH1) protein is Bifunctional protein FolD.